Consider the following 633-residue polypeptide: Laccase ARB_05828 (633 aa).

An N-terminal signal peptide occupies residues Met1–Ala16. Residues Gly22 to Arg47 constitute a propeptide that is removed on maturation. The N-linked (GlcNAc...) asparagine glycan is linked to Asn143. Cu cation is bound by residues His148, His150, His192, and His194. Cys169 and Cys607 are disulfide-bonded. Positions Leu224–Ala353 constitute a Plastocyanin-like domain. Residues Asn286 and Asn456 are each glycosylated (N-linked (GlcNAc...) asparagine). The Cu cation site is built by His508, His511, His513, His568, Cys569, His570, and His574.

This sequence belongs to the multicopper oxidase family. As to quaternary structure, monomer. Requires Cu cation as cofactor.

Its subcellular location is the secreted. It carries out the reaction 4 hydroquinone + O2 = 4 benzosemiquinone + 2 H2O. This chain is Laccase ARB_05828, found in Arthroderma benhamiae (strain ATCC MYA-4681 / CBS 112371) (Trichophyton mentagrophytes).